The sequence spans 312 residues: Malate dehydrogenase (312 aa).

Residues 12-17 (GAGFTG) and aspartate 36 contribute to the NAD(+) site. Substrate-binding residues include arginine 87 and arginine 93. NAD(+) contacts are provided by residues asparagine 100 and 123–125 (LTN). Residue asparagine 125 coordinates substrate. Serine 149 carries the phosphoserine modification. Substrate is bound at residue arginine 156. The active-site Proton acceptor is the histidine 180.

Belongs to the LDH/MDH superfamily. MDH type 3 family.

The catalysed reaction is (S)-malate + NAD(+) = oxaloacetate + NADH + H(+). In terms of biological role, catalyzes the reversible oxidation of malate to oxaloacetate. This chain is Malate dehydrogenase, found in Bacillus anthracis (strain A0248).